Reading from the N-terminus, the 127-residue chain is Ribosome-binding factor A (127 aa).

The protein belongs to the RbfA family. In terms of assembly, monomer. Binds 30S ribosomal subunits, but not 50S ribosomal subunits or 70S ribosomes.

The protein resides in the cytoplasm. Functionally, one of several proteins that assist in the late maturation steps of the functional core of the 30S ribosomal subunit. Associates with free 30S ribosomal subunits (but not with 30S subunits that are part of 70S ribosomes or polysomes). Required for efficient processing of 16S rRNA. May interact with the 5'-terminal helix region of 16S rRNA. This chain is Ribosome-binding factor A, found in Glaesserella parasuis serovar 5 (strain SH0165) (Haemophilus parasuis).